Consider the following 407-residue polypeptide: Phenazine 1,6-dicarboxylic acid hydroxylase PhzS (407 aa).

3 residues coordinate FAD: Gly-17, Val-134, and Asp-313.

FAD is required as a cofactor.

The catalysed reaction is phenazine-1,6-dicarboxylate + NADH + O2 + 2 H(+) = 6-hydroxyphenazine-1-carboxylate + CO2 + NAD(+) + H2O. It carries out the reaction 6-hydroxyphenazine-1-carboxylate + NADH + O2 + 2 H(+) = 1,6-dihydroxyphenazine + CO2 + NAD(+) + H2O. It catalyses the reaction phenazine-1-carboxylate + NADH + O2 + 2 H(+) = 1-hydroxyphenazine + CO2 + NAD(+) + H2O. Functionally, involved in the biosynthesis of phenazine natural products including myxin, an N(5),N(10)-dioxide phenazine antiobiotic, which has antimicrobial activity. Catalyzes the decarboxylative hydroxylations of phenazine 1,6-dicarboxylic acid (PDC) to produce 1,6-dihydroxyphenazine (DHP). Low activity with phenazine 1-carboxylic acid (PCA) to produce 1-hydroxyphenazine. The polypeptide is Phenazine 1,6-dicarboxylic acid hydroxylase PhzS (Lysobacter antibioticus).